Here is a 525-residue protein sequence, read N- to C-terminus: Ribosomal protein uS12 methylthiotransferase RimO (525 aa).

Residues 1–20 show a composition bias toward polar residues; that stretch reads MPKISTESVNTTIAPSQPAS. The tract at residues 1 to 44 is disordered; it reads MPKISTESVNTTIAPSQPASTAPKDTATLFNPAKPTATPAQSSI. In terms of domain architecture, MTTase N-terminal spans 82–192; sequence PKIGFVSLGC…VIRAVALHVP (111 aa). [4Fe-4S] cluster is bound by residues cysteine 91, cysteine 127, cysteine 156, cysteine 230, cysteine 234, and cysteine 237. Residues 216 to 453 form the Radical SAM core domain; that stretch reads LTPSHYAYLK…MTLQQDISAQ (238 aa). Residues 456 to 525 form the TRAM domain; that stretch reads QEKIGKTLMV…EYDLFASYQA (70 aa).

This sequence belongs to the methylthiotransferase family. RimO subfamily. [4Fe-4S] cluster is required as a cofactor.

It is found in the cytoplasm. The catalysed reaction is L-aspartate(89)-[ribosomal protein uS12]-hydrogen + (sulfur carrier)-SH + AH2 + 2 S-adenosyl-L-methionine = 3-methylsulfanyl-L-aspartate(89)-[ribosomal protein uS12]-hydrogen + (sulfur carrier)-H + 5'-deoxyadenosine + L-methionine + A + S-adenosyl-L-homocysteine + 2 H(+). In terms of biological role, catalyzes the methylthiolation of an aspartic acid residue of ribosomal protein uS12. The protein is Ribosomal protein uS12 methylthiotransferase RimO of Psychrobacter arcticus (strain DSM 17307 / VKM B-2377 / 273-4).